A 301-amino-acid chain; its full sequence is tRNA pseudouridine synthase B (301 aa).

Aspartate 38 serves as the catalytic Nucleophile.

This sequence belongs to the pseudouridine synthase TruB family. Type 1 subfamily.

It catalyses the reaction uridine(55) in tRNA = pseudouridine(55) in tRNA. Functionally, responsible for synthesis of pseudouridine from uracil-55 in the psi GC loop of transfer RNAs. This chain is tRNA pseudouridine synthase B, found in Clostridioides difficile (strain 630) (Peptoclostridium difficile).